Reading from the N-terminus, the 287-residue chain is CTD small phosphatase-like protein 3 (287 aa).

One can recognise an FCP1 homology domain in the interval 60–219 (RSTPEYTLVL…LKLCSFLEAI (160 aa)).

Belongs to the CTDSPL2 family.

In terms of biological role, probable phosphatase. The sequence is that of CTD small phosphatase-like protein 3 (scpl-3) from Caenorhabditis elegans.